A 251-amino-acid chain; its full sequence is Triosephosphate isomerase (251 aa).

Residue 9–11 (NWK) participates in substrate binding. H95 acts as the Electrophile in catalysis. E167 acts as the Proton acceptor in catalysis. Substrate contacts are provided by residues G173, S213, and 234–235 (GG). Position 213 is a phosphoserine (S213).

The protein belongs to the triosephosphate isomerase family. Homodimer.

It localises to the cytoplasm. The catalysed reaction is D-glyceraldehyde 3-phosphate = dihydroxyacetone phosphate. Its pathway is carbohydrate biosynthesis; gluconeogenesis. The protein operates within carbohydrate degradation; glycolysis; D-glyceraldehyde 3-phosphate from glycerone phosphate: step 1/1. In terms of biological role, involved in the gluconeogenesis. Catalyzes stereospecifically the conversion of dihydroxyacetone phosphate (DHAP) to D-glyceraldehyde-3-phosphate (G3P). This chain is Triosephosphate isomerase, found in Bacillus cereus (strain G9842).